The chain runs to 147 residues: MTMHLNDLKPADGARTERTRVGRGIGSGLGKTCGRGHKGSFARKGGGKIKAGFEGGQTPMQRRLPKIGFRSKMARDSAEVLSYQLDKLEAGEIDFAALRAANLVPSRAKKAKIVLKGELSKKFVLKGVAATAGAKAAIEAAGGSVEE.

Residues 1–20 show a composition bias toward basic and acidic residues; sequence MTMHLNDLKPADGARTERTR. The interval 1 to 64 is disordered; that stretch reads MTMHLNDLKP…GGQTPMQRRL (64 aa). Residues 23–33 show a composition bias toward gly residues; it reads RGIGSGLGKTC. A compositionally biased stretch (basic residues) spans 34–47; it reads GRGHKGSFARKGGG.

This sequence belongs to the universal ribosomal protein uL15 family. As to quaternary structure, part of the 50S ribosomal subunit.

Its function is as follows. Binds to the 23S rRNA. The chain is Large ribosomal subunit protein uL15 from Xanthomonas campestris pv. campestris (strain 8004).